A 260-amino-acid chain; its full sequence is Circadian clock-controlled protein daywake (260 aa).

Residues 1 to 25 form the signal peptide; sequence MQLTGASMFLVWVGLLSWVSCRVDA.

Belongs to the TO family. As to expression, epidermis of newly eclosed adults.

Functionally, component of the circadian clock or downstream effector of clock function. Required for suppressing daytime sleep (siesta) under ambient environmental temperatures. Part of a heat avoidance mechanism that modulates daytime sleep behavior under different environmental temperatures to minimize the risk of heat exposure. Under cooler ambient temperatures, suppresses daytime sleep (siesta) and thus allows for longer periods of daytime activity. The chain is Circadian clock-controlled protein daywake from Drosophila melanogaster (Fruit fly).